The primary structure comprises 719 residues: Glutamate--tRNA ligase, cytoplasmic (719 aa).

Ser93 is an ATP binding site. The interval 176–205 is disordered; sequence SGKPVAAPKSKDSQQAVKGDGQDKGKPEVD. The segment covering 195 to 204 has biased composition (basic and acidic residues); the sequence is DGQDKGKPEV. 217 to 219 contributes to the L-glutamate binding site; it reads RFA. The 'HIGH' region signature appears at 220 to 230; it reads PEPSGYLHIGH. His227 provides a ligand contact to ATP. L-glutamate-binding positions include 393–397 and Arg411; that span reads YDFAC. Residues Glu414 and 448-452 each bind ATP; that span reads LLSKR. The 'KMSKS' region motif lies at 448 to 452; it reads LLSKR.

It belongs to the class-I aminoacyl-tRNA synthetase family. Glutamate--tRNA ligase type 2 subfamily. As to quaternary structure, interacts with GLN2, COL4 and RPP13L4/ZAR1.

The protein localises to the cytoplasm. The protein resides in the cytosol. It catalyses the reaction tRNA(Glu) + L-glutamate + ATP = L-glutamyl-tRNA(Glu) + AMP + diphosphate. Functionally, catalyzes the attachment of glutamate to tRNA(Glu) in a two-step reaction: glutamate is first activated by ATP to form Glu-AMP and then transferred to the acceptor end of tRNA(Glu). In Arabidopsis thaliana (Mouse-ear cress), this protein is Glutamate--tRNA ligase, cytoplasmic.